The sequence spans 83 residues: Small ribosomal subunit protein eS21 (83 aa).

This sequence belongs to the eukaryotic ribosomal protein eS21 family. In terms of assembly, component of the 40S small ribosomal subunit.

It is found in the cytoplasm. It localises to the cytosol. The protein localises to the rough endoplasmic reticulum. Functionally, component of the small ribosomal subunit. The ribosome is a large ribonucleoprotein complex responsible for the synthesis of proteins in the cell. The sequence is that of Small ribosomal subunit protein eS21 (rps21) from Xenopus laevis (African clawed frog).